A 476-amino-acid polypeptide reads, in one-letter code: WD repeat, SAM and U-box domain-containing protein 1 (476 aa).

7 WD repeats span residues 10–47 (DHSDDVNCCAFSSSCLATCSLDKTIRIYSLNDFTELPY), 52–91 (GHTYAVHCCCFSPSGHTLASCSTDGATIIWDTSDGRMLAV), 95–134 (PTGSPVRVCRFSPESTYLVSGAADGSVVLWNVHSMKFYRS), 137–176 (VKDGSLVACAFSPGGNFFVTGSSCGDLTVWDDKMRCLCNE), 178–227 (AHDL…FLGG), 237–276 (GHSAPVLTCAFSYDGQMLVSGSVDKCVIIYETNTGNILHT), and 279–318 (QHTRYVTTCAFAPCSLFLATGSMDKTVHIWKLDNKQPCAG). The SAM domain occupies 333–396 (WSEDDVSAWL…LQKIEELRMK (64 aa)). The region spanning 403–476 (AVPDEFLCPI…ISRWLETQQK (74 aa)) is the U-box domain.

The chain is WD repeat, SAM and U-box domain-containing protein 1 (WDSUB1) from Gallus gallus (Chicken).